The primary structure comprises 235 residues: Proteasome subunit alpha (235 aa).

Belongs to the peptidase T1A family. As to quaternary structure, the 20S proteasome core is composed of 14 alpha and 14 beta subunits that assemble into four stacked heptameric rings, resulting in a barrel-shaped structure. The two inner rings, each composed of seven catalytic beta subunits, are sandwiched by two outer rings, each composed of seven alpha subunits. The catalytic chamber with the active sites is on the inside of the barrel. Has a gated structure, the ends of the cylinder being occluded by the N-termini of the alpha-subunits. Is capped by the proteasome-associated ATPase, ARC.

The protein resides in the cytoplasm. It functions in the pathway protein degradation; proteasomal Pup-dependent pathway. With respect to regulation, the formation of the proteasomal ATPase ARC-20S proteasome complex, likely via the docking of the C-termini of ARC into the intersubunit pockets in the alpha-rings, may trigger opening of the gate for substrate entry. Interconversion between the open-gate and close-gate conformations leads to a dynamic regulation of the 20S proteasome proteolysis activity. Component of the proteasome core, a large protease complex with broad specificity involved in protein degradation. The polypeptide is Proteasome subunit alpha (Arthrobacter sp. (strain FB24)).